Reading from the N-terminus, the 577-residue chain is F-box/TPR repeat protein pof3 (577 aa).

3 TPR repeats span residues 6–39 (VKAIKEKTQQYLSKRKFEDALTFITKTIEQEPNP), 41–74 (IDLFELRAQVYEKSGQYSQAELDAKRMIHLNARN), and 76–108 (RGYLRLGKLLQLDGFDKKADQLYTQGLRMVHKM). An F-box domain is found at 138 to 180 (ILPREVLLCILQQLNFKSIVQCMQVCKHWRDCIKKEPSLFCCL).

A part of the E3 ubiquitin ligase Skp1-Cullin-1-F-box (SCF) complex. Interacts with cul1, mcl1 and skp1.

The protein resides in the mitochondrion. It is found in the nucleus. Has a role in substrate recognition in the Skp1-Cullin-1/Cdc53-F-box (SCF) ubiquitin ligase complex. Required for the maintenance of telomere length and transcriptional silencing at the telomere. Also required for chromosome segregation. The protein is F-box/TPR repeat protein pof3 (pof3) of Schizosaccharomyces pombe (strain 972 / ATCC 24843) (Fission yeast).